The sequence spans 414 residues: uncharacterized protein (414 aa).

Residues 1-16 (MRVILLLAFLISLTEC) form the signal peptide. Residues 20–59 (SEDLALYDLVEEVGVNFYEWFDIPRDASSNQVKKAYRKLT) enclose the Myb-like 1 domain. A J domain is found at 35–99 (NFYEWFDIPR…ELREKYDNVL (65 aa)). The chain crosses the membrane as a helical span at residues 125-145 (ILVLLFIGTIAHYLMMWAAYF). The interval 211–234 (MTPKEVEPEEPTEEELAQQRRQQR) is disordered. Residues 217 to 226 (EPEEPTEEEL) show a composition bias toward acidic residues. The 47-residue stretch at 274–320 (AQKQSGATWTPDELASLVRLSTEKYPAGTPNRWEQMGRVLNRSAEDV) folds into the Myb-like 2 domain. In terms of domain architecture, SANT spans 352–407 (KSEDDWSQAEQKAFETALQKYPKGTDERWERISEEIGSKTKKQVMVRFKQLAEMIR).

Its subcellular location is the nucleus membrane. This is an uncharacterized protein from Caenorhabditis elegans.